The chain runs to 783 residues: LPS-assembly protein LptD (783 aa).

The N-terminal stretch at 1–24 (MKKNYYSLISFSIFTALYSTAGFA) is a signal peptide.

This sequence belongs to the LptD family. As to quaternary structure, component of the lipopolysaccharide transport and assembly complex. Interacts with LptE and LptA.

Its subcellular location is the cell outer membrane. Its function is as follows. Together with LptE, is involved in the assembly of lipopolysaccharide (LPS) at the surface of the outer membrane. The polypeptide is LPS-assembly protein LptD (Mannheimia succiniciproducens (strain KCTC 0769BP / MBEL55E)).